A 136-amino-acid polypeptide reads, in one-letter code: Protein PsiE (136 aa).

Transmembrane regions (helical) follow at residues Ile-15 to Leu-35, Tyr-55 to Val-75, Phe-82 to Ile-102, and Pro-108 to Cys-128.

It belongs to the PsiE family.

It localises to the cell inner membrane. The chain is Protein PsiE from Salmonella arizonae (strain ATCC BAA-731 / CDC346-86 / RSK2980).